The primary structure comprises 759 residues: 1,4-alpha-glucan branching enzyme GlgB (759 aa).

The interval 1-21 is disordered; the sequence is MAKTKGLPKDTAVTPSPHLRP. Catalysis depends on D422, which acts as the Nucleophile. E475 acts as the Proton donor in catalysis.

The protein belongs to the glycosyl hydrolase 13 family. GlgB subfamily. As to quaternary structure, monomer.

It catalyses the reaction Transfers a segment of a (1-&gt;4)-alpha-D-glucan chain to a primary hydroxy group in a similar glucan chain.. It functions in the pathway glycan biosynthesis; glycogen biosynthesis. In terms of biological role, catalyzes the formation of the alpha-1,6-glucosidic linkages in glycogen by scission of a 1,4-alpha-linked oligosaccharide from growing alpha-1,4-glucan chains and the subsequent attachment of the oligosaccharide to the alpha-1,6 position. The sequence is that of 1,4-alpha-glucan branching enzyme GlgB from Mycobacterium sp. (strain JLS).